A 429-amino-acid polypeptide reads, in one-letter code: Histidine--tRNA ligase (429 aa).

Belongs to the class-II aminoacyl-tRNA synthetase family. As to quaternary structure, homodimer.

It localises to the cytoplasm. The catalysed reaction is tRNA(His) + L-histidine + ATP = L-histidyl-tRNA(His) + AMP + diphosphate + H(+). This chain is Histidine--tRNA ligase, found in Streptococcus pneumoniae (strain Taiwan19F-14).